A 563-amino-acid polypeptide reads, in one-letter code: Serine palmitoyltransferase 3 (563 aa).

Positions 1–29 are enriched in polar residues; sequence MANLNDSAVTNGTLHNPKTQQGKRQSTGC. The segment at 1–32 is disordered; that stretch reads MANLNDSAVTNGTLHNPKTQQGKRQSTGCVKN. The chain crosses the membrane as a helical span at residues 59 to 79; that stretch reads PLYVYVLTYMGYGIGILFGYL. N6-(pyridoxal phosphate)lysine is present on Lys-371.

Belongs to the class-II pyridoxal-phosphate-dependent aminotransferase family. In terms of assembly, component of the serine palmitoyltransferase (SPT) complex, which is composed of SPTLC1, SPTLC2 or SPTLC3 and SPTSSA or SPTSSB. The heterodimer consisting of SPTLC1 and SPTLC2/SPTLC3 forms the catalytic core of the enzyme, while SPTSSA or SPTSSB subunits determine substrate specificity. SPT also interacts with ORMDL proteins, especially ORMDL3, which negatively regulate SPT activity in the presence of ceramides. It depends on pyridoxal 5'-phosphate as a cofactor. In terms of tissue distribution, expressed in white and brown adipose tissues.

The protein resides in the endoplasmic reticulum membrane. The enzyme catalyses L-serine + hexadecanoyl-CoA + H(+) = 3-oxosphinganine + CO2 + CoA. The catalysed reaction is dodecanoyl-CoA + L-serine + H(+) = 3-oxotetradecasphinganine + CO2 + CoA. It carries out the reaction tetradecanoyl-CoA + L-serine + H(+) = 3-oxohexadecasphinganine + CO2 + CoA. It catalyses the reaction octadecanoyl-CoA + L-serine + H(+) = 3-oxoeicosasphinganine + CO2 + CoA. It participates in lipid metabolism; sphingolipid metabolism. SPT complex catalytic activity is negatively regulated by ORMDL proteins, including ORMDL3, in the presence of ceramides. This mechanism allows to maintain ceramide levels at sufficient concentrations for the production of complex sphingolipids, but which prevents the accumulation of ceramides to levels that trigger apoptosis. Component of the serine palmitoyltransferase multisubunit enzyme (SPT) that catalyzes the initial and rate-limiting step in sphingolipid biosynthesis by condensing L-serine and activated acyl-CoA (most commonly palmitoyl-CoA) to form long-chain bases. The SPT complex is composed of SPTLC1, SPTLC2 or SPTLC3 and SPTSSA or SPTSSB. Within this complex, the heterodimer consisting of SPTLC1 and SPTLC2/SPTLC3 forms the catalytic core. The composition of the serine palmitoyltransferase (SPT) complex determines the substrate preference. The SPTLC1-SPTLC2-SPTSSA complex shows a strong preference for C16-CoA substrate, while the SPTLC1-SPTLC3-SPTSSA isozyme uses both C14-CoA and C16-CoA as substrates, with a slight preference for C14-CoA. The SPTLC1-SPTLC2-SPTSSB complex shows a strong preference for C18-CoA substrate, while the SPTLC1-SPTLC3-SPTSSB isozyme displays an ability to use a broader range of acyl-CoAs, without apparent preference. This is Serine palmitoyltransferase 3 from Mus musculus (Mouse).